Here is a 300-residue protein sequence, read N- to C-terminus: Protoheme IX farnesyltransferase (300 aa).

Helical transmembrane passes span I20–G40, W49–Y69, V97–I117, A122–V142, L145–A165, L176–Y196, A217–G237, L242–Y262, and L278–F298.

Belongs to the UbiA prenyltransferase family. Protoheme IX farnesyltransferase subfamily.

The protein localises to the cell inner membrane. The enzyme catalyses heme b + (2E,6E)-farnesyl diphosphate + H2O = Fe(II)-heme o + diphosphate. Its pathway is porphyrin-containing compound metabolism; heme O biosynthesis; heme O from protoheme: step 1/1. In terms of biological role, converts heme B (protoheme IX) to heme O by substitution of the vinyl group on carbon 2 of heme B porphyrin ring with a hydroxyethyl farnesyl side group. This Flavobacterium johnsoniae (strain ATCC 17061 / DSM 2064 / JCM 8514 / BCRC 14874 / CCUG 350202 / NBRC 14942 / NCIMB 11054 / UW101) (Cytophaga johnsonae) protein is Protoheme IX farnesyltransferase.